Consider the following 275-residue polypeptide: Formamidopyrimidine-DNA glycosylase (275 aa).

Pro2 (schiff-base intermediate with DNA) is an active-site residue. Catalysis depends on Glu3, which acts as the Proton donor. Lys58 acts as the Proton donor; for beta-elimination activity in catalysis. DNA is bound by residues His91 and Arg110. The FPG-type zinc-finger motif lies at 238–272 (QVYGQTGKSCPRCGQAIVKLKVGGRGTHICPKCQK). The active-site Proton donor; for delta-elimination activity is the Arg262.

The protein belongs to the FPG family. Monomer. It depends on Zn(2+) as a cofactor.

The catalysed reaction is Hydrolysis of DNA containing ring-opened 7-methylguanine residues, releasing 2,6-diamino-4-hydroxy-5-(N-methyl)formamidopyrimidine.. It catalyses the reaction 2'-deoxyribonucleotide-(2'-deoxyribose 5'-phosphate)-2'-deoxyribonucleotide-DNA = a 3'-end 2'-deoxyribonucleotide-(2,3-dehydro-2,3-deoxyribose 5'-phosphate)-DNA + a 5'-end 5'-phospho-2'-deoxyribonucleoside-DNA + H(+). Its function is as follows. Involved in base excision repair of DNA damaged by oxidation or by mutagenic agents. Acts as a DNA glycosylase that recognizes and removes damaged bases. Has a preference for oxidized purines, such as 7,8-dihydro-8-oxoguanine (8-oxoG). Has AP (apurinic/apyrimidinic) lyase activity and introduces nicks in the DNA strand. Cleaves the DNA backbone by beta-delta elimination to generate a single-strand break at the site of the removed base with both 3'- and 5'-phosphates. In Streptococcus pyogenes serotype M3 (strain ATCC BAA-595 / MGAS315), this protein is Formamidopyrimidine-DNA glycosylase.